The chain runs to 266 residues: Early E1A protein (266 aa).

The tract at residues 39–47 (PSLYELYDL) is interaction with RB1 in competition with E2F1. The interaction with UBE2I stretch occupies residues 75–145 (EGLFLPEPPV…AAAAADRERE (71 aa)). The PXLXP motif, interaction with host ZMYND11 signature appears at 98–102 (PQLHP). The short motif at 107 to 111 (LLCYE) is the LXCXE motif, interaction with host RB1 and TMEM173/STING element. Residues 159–179 (CKSCEHHRNSTGNTDLMCSLC) fold into a zinc finger. The tract at residues 195-226 (NEPEPNSTLDGDERPSPPKLGSAVPEGVIKPV) is disordered. Positions 255-259 (PVDLS) match the PXDLS motif, CTBP-binding motif. The short motif at 261–265 (KRPRC) is the Nuclear localization signal element.

The protein belongs to the adenoviridae E1A protein family. Interacts with host UBE2I; this interaction interferes with polySUMOylation. Interacts with host RB1; this interaction induces the aberrant dissociation of RB1-E2F1 complex thereby disrupting the activity of RB1 and activating E2F1-regulated genes. Interacts with host ATF7; the interaction enhances ATF7-mediated viral transactivation activity which requires the zinc binding domains of both proteins. Isoform early E1A 32 kDa protein and isoform early E1A 26 kDa protein interact (via N-terminus) with CUL1 and E3 ubiquitin ligase RBX1; these interactions inhibit RBX1-CUL1-dependent elongation reaction of ubiquitin chains and attenuate ubiquitination of SCF(FBXW7) target proteins. Interacts (via PXLXP motif) with host ZMYND11/BS69 (via MYND-type zinc finger); this interaction inhibits E1A mediated transactivation. Interacts with host EP300; this interaction stimulates the acetylation of RB1 by recruiting EP300 and RB1 into a multimeric-protein complex. Interacts with host CTBP1 and CTBP2; this interaction seems to potentiate viral replication. Interacts with host DCAF7. Interacts with host DYRK1A. Interacts with host KPNA4; this interaction allows E1A import into the host nucleus. Interacts with host EP400; this interaction stabilizes MYC. Interacts with host TBP protein; this interaction probably disrupts the TBP-TATA complex. Interacts (via LXCXE motif) with host TMEM173/STING; this interaction impairs the ability of TMEM173/STING to sense cytosolic DNA and promote the production of type I interferon (IFN-alpha and IFN-beta). Interacts (via C-terminus) with host ZBED1/hDREF (via C-terminus); the interaction is direct.

It localises to the host nucleus. Plays a role in viral genome replication by driving entry of quiescent cells into the cell cycle. Stimulation of progression from G1 to S phase allows the virus to efficiently use the cellular DNA replicating machinery to achieve viral genome replication. E1A protein has both transforming and trans-activating activities. Induces the disassembly of the E2F1 transcription factor from RB1 by direct competition for the same binding site on RB1, with subsequent transcriptional activation of E2F1-regulated S-phase genes and of the E2 region of the adenoviral genome. Release of E2F1 leads to the ARF-mediated inhibition of MDM2 and causes TP53/p53 to accumulate because it is not targeted for degradation by MDM2-mediated ubiquitination anymore. This increase in TP53, in turn, would arrest the cell proliferation and direct its death but this effect is counteracted by the viral protein E1B-55K. Inactivation of the ability of RB1 to arrest the cell cycle is critical for cellular transformation, uncontrolled cellular growth and proliferation induced by viral infection. Interaction with RBX1 and CUL1 inhibits ubiquitination of the proteins targeted by SCF(FBXW7) ubiquitin ligase complex, and may be linked to unregulated host cell proliferation. The tumorigenesis-restraining activity of E1A may be related to the disruption of the host CtBP-CtIP complex through the CtBP binding motif. Interaction with host TMEM173/STING impairs the ability of TMEM173/STING to sense cytosolic DNA and promote the production of type I interferon (IFN-alpha and IFN-beta). Promotes the sumoylation of host ZBED1/hDREF with SUMO1. This is Early E1A protein from Homo sapiens (Human).